Here is a 111-residue protein sequence, read N- to C-terminus: UPF0342 protein SAG1376 (111 aa).

The span at 52–63 (QEMMQSGQMPSQ) shows a compositional bias: polar residues. The disordered stretch occupies residues 52-71 (QEMMQSGQMPSQEEQDEMSK).

It belongs to the UPF0342 family.

The protein is UPF0342 protein SAG1376 of Streptococcus agalactiae serotype V (strain ATCC BAA-611 / 2603 V/R).